Consider the following 693-residue polypeptide: UvrABC system protein C (693 aa).

A GIY-YIG domain is found at 16-95 (DAPGVYRFRD…IKEFDPRFNV (80 aa)). Residues 208–243 (GVFLRRLESEMAAASAELDFERAARVRDDINALRRV) enclose the UVR domain. The interval 656-693 (APSPDDATTEPGAVGEPGTADGAAADPDGRDAVVVPEG) is disordered. The segment covering 672–693 (PGTADGAAADPDGRDAVVVPEG) has biased composition (low complexity).

This sequence belongs to the UvrC family. Interacts with UvrB in an incision complex.

The protein localises to the cytoplasm. The UvrABC repair system catalyzes the recognition and processing of DNA lesions. UvrC both incises the 5' and 3' sides of the lesion. The N-terminal half is responsible for the 3' incision and the C-terminal half is responsible for the 5' incision. The chain is UvrABC system protein C from Beutenbergia cavernae (strain ATCC BAA-8 / DSM 12333 / CCUG 43141 / JCM 11478 / NBRC 16432 / NCIMB 13614 / HKI 0122).